We begin with the raw amino-acid sequence, 837 residues long: Tuftelin-interacting protein 11 (837 aa).

Basic and acidic residues-rich tracts occupy residues 1 to 13 (MSLS…GEGR) and 53 to 64 (VWAERDSDDERP). Disordered stretches follow at residues 1–21 (MSLS…DDER), 53–72 (VWAE…KRAR), and 85–133 (LKKG…KGFA). Residues 1-50 (MSLSHLYRDGEGRIDDDDDERENFEITDWDLQNEFNPNRQRHWQTKEEAT) form a required for interaction with DHX15 region. Residues Ser-2, Ser-59, and Ser-98 each carry the phosphoserine modification. Acidic residues predominate over residues 91–102 (EEAELEDSDDEE). Basic and acidic residues predominate over residues 103–116 (KPVKQDDFPKDFGP). At Ser-144 the chain carries Phosphoserine. The region spanning 149–195 (TKGIGQKLLQKMGYVPGRGLGKNAQGIINPIEAKQRKGKGAVGAYGS) is the G-patch domain. Positions 179-236 (IEAKQRKGKGAVGAYGSERTTQSMQDFPVVDSEEEAEEEFQKELSQWRKDPSGSKKKP) are disordered. Residue Ser-210 is modified to Phosphoserine. Over residues 217–231 (EFQKELSQWRKDPSG) the composition is skewed to basic and acidic residues. The Nuclear localization signal motif lies at 700–705 (VKDKFN). A required for nuclear speckle localization region spans residues 710–734 (IMNRAVSSNVGAYMQPGARENIAYL).

The protein belongs to the TFP11/STIP family. As to quaternary structure, identified in the spliceosome C complex. Found in the Intron Large (IL) complex, a post-mRNA release spliceosomal complex containing the excised intron, U2, U5 and U6 snRNPs, and splicing factors. Interacts with TUFT1. Interacts with DHX15; indicative for a recruitment of DHX15 to the IL complex. Interacts with GCFC2.

Its subcellular location is the cytoplasm. The protein resides in the nucleus. In terms of biological role, involved in pre-mRNA splicing, specifically in spliceosome disassembly during late-stage splicing events. Intron turnover seems to proceed through reactions in two lariat-intron associated complexes termed Intron Large (IL) and Intron Small (IS). In cooperation with DHX15 seems to mediate the transition of the U2, U5 and U6 snRNP-containing IL complex to the snRNP-free IS complex leading to efficient debranching and turnover of excised introns. May play a role in the differentiation of ameloblasts and odontoblasts or in the forming of the enamel extracellular matrix. The chain is Tuftelin-interacting protein 11 (TFIP11) from Homo sapiens (Human).